Here is a 256-residue protein sequence, read N- to C-terminus: Imidazole glycerol phosphate synthase subunit HisF (256 aa).

Residues Asp12 and Asp131 contribute to the active site.

Belongs to the HisA/HisF family. Heterodimer of HisH and HisF.

Its subcellular location is the cytoplasm. It catalyses the reaction 5-[(5-phospho-1-deoxy-D-ribulos-1-ylimino)methylamino]-1-(5-phospho-beta-D-ribosyl)imidazole-4-carboxamide + L-glutamine = D-erythro-1-(imidazol-4-yl)glycerol 3-phosphate + 5-amino-1-(5-phospho-beta-D-ribosyl)imidazole-4-carboxamide + L-glutamate + H(+). Its pathway is amino-acid biosynthesis; L-histidine biosynthesis; L-histidine from 5-phospho-alpha-D-ribose 1-diphosphate: step 5/9. In terms of biological role, IGPS catalyzes the conversion of PRFAR and glutamine to IGP, AICAR and glutamate. The HisF subunit catalyzes the cyclization activity that produces IGP and AICAR from PRFAR using the ammonia provided by the HisH subunit. This chain is Imidazole glycerol phosphate synthase subunit HisF, found in Pseudomonas fluorescens (strain ATCC BAA-477 / NRRL B-23932 / Pf-5).